A 138-amino-acid polypeptide reads, in one-letter code: Vesicle transport protein GOT1B (138 aa).

Met-1 is modified (N-acetylmethionine). Residues 1–9 lie on the Cytoplasmic side of the membrane; sequence MISLTDTQK. The helical transmembrane segment at 10–30 threads the bilayer; it reads IGMGLTGFGVFFLFFGMILFF. Residues 31–32 lie on the Lumenal side of the membrane; it reads DK. A helical membrane pass occupies residues 33-53; that stretch reads ALLAIGNVLFVAGLAFVIGLE. The Cytoplasmic segment spans residues 54 to 68; that stretch reads RTFRFFFQKHKMKAT. A helical transmembrane segment spans residues 69 to 89; the sequence is GFFLGGVFVVLIGWPLIGMIF. A topological domain (lumenal) is located at residue Glu-90. Residues 91–109 form a helical membrane-spanning segment; that stretch reads IYGFFLLFRGFFPVVVGFI. At 110-138 the chain is on the cytoplasmic side; that stretch reads RRVPVLGSLLNLPGIRSFVDKVGESNNMV.

Belongs to the GOT1 family.

It localises to the golgi apparatus membrane. May be involved in fusion of ER-derived transport vesicles with the Golgi complex. The protein is Vesicle transport protein GOT1B of Bos taurus (Bovine).